We begin with the raw amino-acid sequence, 406 residues long: Succinylornithine transaminase (406 aa).

Residue K252 is modified to N6-(pyridoxal phosphate)lysine.

Belongs to the class-III pyridoxal-phosphate-dependent aminotransferase family. AstC subfamily. It depends on pyridoxal 5'-phosphate as a cofactor.

It catalyses the reaction N(2)-succinyl-L-ornithine + 2-oxoglutarate = N-succinyl-L-glutamate 5-semialdehyde + L-glutamate. The protein operates within amino-acid degradation; L-arginine degradation via AST pathway; L-glutamate and succinate from L-arginine: step 3/5. Its function is as follows. Catalyzes the transamination of N(2)-succinylornithine and alpha-ketoglutarate into N(2)-succinylglutamate semialdehyde and glutamate. Can also act as an acetylornithine aminotransferase. This is Succinylornithine transaminase from Escherichia coli O157:H7.